The following is a 287-amino-acid chain: uncharacterized protein (287 aa).

This is an uncharacterized protein from Acanthamoeba polyphaga mimivirus (APMV).